The primary structure comprises 390 residues: Phosphopentomutase (390 aa).

Mn(2+) contacts are provided by aspartate 11, aspartate 283, histidine 288, aspartate 324, histidine 325, and histidine 336.

This sequence belongs to the phosphopentomutase family. Mn(2+) serves as cofactor.

The protein resides in the cytoplasm. The enzyme catalyses 2-deoxy-alpha-D-ribose 1-phosphate = 2-deoxy-D-ribose 5-phosphate. It carries out the reaction alpha-D-ribose 1-phosphate = D-ribose 5-phosphate. Its pathway is carbohydrate degradation; 2-deoxy-D-ribose 1-phosphate degradation; D-glyceraldehyde 3-phosphate and acetaldehyde from 2-deoxy-alpha-D-ribose 1-phosphate: step 1/2. Functionally, isomerase that catalyzes the conversion of deoxy-ribose 1-phosphate (dRib-1-P) and ribose 1-phosphate (Rib-1-P) to deoxy-ribose 5-phosphate (dRib-5-P) and ribose 5-phosphate (Rib-5-P), respectively. This Clostridium acetobutylicum (strain ATCC 824 / DSM 792 / JCM 1419 / IAM 19013 / LMG 5710 / NBRC 13948 / NRRL B-527 / VKM B-1787 / 2291 / W) protein is Phosphopentomutase.